The following is a 635-amino-acid chain: Threonine--tRNA ligase (635 aa).

A TGS domain is found at 1-58 (MIHVTCNQEAFELPEGASAMDLANKMKQSHCFVGALINDQEKDLSTTLQDGDTVLFLT). The interval 237–528 (DHRVLGTKLD…LIEHFKGRFP (292 aa)) is catalytic. Zn(2+) contacts are provided by C328, H379, and H505.

The protein belongs to the class-II aminoacyl-tRNA synthetase family. Homodimer. Requires Zn(2+) as cofactor.

It localises to the cytoplasm. The catalysed reaction is tRNA(Thr) + L-threonine + ATP = L-threonyl-tRNA(Thr) + AMP + diphosphate + H(+). In terms of biological role, catalyzes the attachment of threonine to tRNA(Thr) in a two-step reaction: L-threonine is first activated by ATP to form Thr-AMP and then transferred to the acceptor end of tRNA(Thr). Also edits incorrectly charged L-seryl-tRNA(Thr). This is Threonine--tRNA ligase from Chlamydia trachomatis serovar L2b (strain UCH-1/proctitis).